Reading from the N-terminus, the 479-residue chain is Anaerobic nitric oxide reductase flavorubredoxin (479 aa).

Positions 30-210 (LRGSSYNSYL…PFSRLVTPKI (181 aa)) are zinc metallo-hydrolase. His-79, Glu-81, Asp-83, His-147, Asp-166, and His-227 together coordinate Fe cation. The Flavodoxin-like domain occupies 254 to 393 (ITIFYDTMSN…LCREHGREIA (140 aa)). Residues 260–264 (TMSNN) and 342–369 (AFGS…EMSL) contribute to the FMN site. The 52-residue stretch at 423-474 (GPRMQCSVCQWIYDPAKGEPMQDVAPGTPWSEVPDNFLCPECSLGKDVFDEL) folds into the Rubredoxin-like domain. Positions 428, 431, 461, and 464 each coordinate Fe cation.

The protein in the N-terminal section; belongs to the zinc metallo-hydrolase group 3 family. In terms of assembly, homotetramer. Requires Fe cation as cofactor. The cofactor is FMN.

Its subcellular location is the cytoplasm. It functions in the pathway nitrogen metabolism; nitric oxide reduction. Anaerobic nitric oxide reductase; uses NADH to detoxify nitric oxide (NO), protecting several 4Fe-4S NO-sensitive enzymes. Has at least 2 reductase partners, only one of which (NorW, flavorubredoxin reductase) has been identified. NO probably binds to the di-iron center; electrons enter from the NorW at rubredoxin and are transferred sequentially to the FMN center and the di-iron center. Also able to function as an aerobic oxygen reductase. The polypeptide is Anaerobic nitric oxide reductase flavorubredoxin (Escherichia coli O6:H1 (strain CFT073 / ATCC 700928 / UPEC)).